The following is a 351-amino-acid chain: Inner kinetochore subunit fta2 (351 aa).

The tract at residues 1–71 (MSGRRYSQIS…SSNGRVDTDR (71 aa)) is disordered. Positions 7–18 (SQISQQEGSSSS) are enriched in low complexity. A compositionally biased stretch (polar residues) spans 54-66 (NENSGQSKSSNGR).

The protein belongs to the CENP-P/CTF19 family. Component of the heterotetrameric kinetochore subcomplex COMA, which consists of fta2, fta7, mal2 and mis17. The COMA subcomplex is part of a larger constitutive centromere-associated network (CCAN) (also known as central kinetochore Sim4 complex in fission yeast), which is composed of at least cnl2, cnp3, cnp20, fta1, fta2, fta3, fta4, fta6, fta7, mal2, mhf1, mhf2, mis6, mis15, mis17, sim4 and wip1.

It localises to the nucleus. It is found in the chromosome. Its subcellular location is the centromere. The protein resides in the kinetochore. Component of the kinetochore, a multiprotein complex that assembles on centromeric DNA and attaches chromosomes to spindle microtubules, mediating chromosome segregation and sister chromatid segregation during meiosis and mitosis. Component of the inner kinetochore COMA complex, which connects centromere-associated proteins and the outer kinetochore. COMA interacts with other inner kinetochore proteins to form the inner kinetochore constitutive centromere-associated network (CCAN), which serves as a structural platform for outer kinetochore assembly. Fta2, fta3 and fta4 associate with the central core (cnt) and inner repeat (inr) region of the centromere. In Schizosaccharomyces pombe (strain 972 / ATCC 24843) (Fission yeast), this protein is Inner kinetochore subunit fta2 (fta2).